Consider the following 426-residue polypeptide: UDP-N-acetylglucosamine 1-carboxyvinyltransferase 2 (426 aa).

22-23 (KN) is a phosphoenolpyruvate binding site. Arginine 92 is a binding site for UDP-N-acetyl-alpha-D-glucosamine. The active-site Proton donor is aspartate 116. Residues 121–125 (RPIDQ), aspartate 307, and isoleucine 329 contribute to the UDP-N-acetyl-alpha-D-glucosamine site.

It belongs to the EPSP synthase family. MurA subfamily.

It localises to the cytoplasm. The enzyme catalyses phosphoenolpyruvate + UDP-N-acetyl-alpha-D-glucosamine = UDP-N-acetyl-3-O-(1-carboxyvinyl)-alpha-D-glucosamine + phosphate. Its pathway is cell wall biogenesis; peptidoglycan biosynthesis. Its function is as follows. Cell wall formation. Adds enolpyruvyl to UDP-N-acetylglucosamine. The chain is UDP-N-acetylglucosamine 1-carboxyvinyltransferase 2 from Lactiplantibacillus plantarum (strain ATCC BAA-793 / NCIMB 8826 / WCFS1) (Lactobacillus plantarum).